We begin with the raw amino-acid sequence, 151 residues long: UPF0756 membrane protein Moth_0120 (151 aa).

4 consecutive transmembrane segments (helical) span residues valine 6–alanine 26, alanine 52–proline 72, methionine 75–threonine 95, and methionine 111–valine 131.

It belongs to the UPF0756 family.

The protein resides in the cell membrane. The protein is UPF0756 membrane protein Moth_0120 of Moorella thermoacetica (strain ATCC 39073 / JCM 9320).